We begin with the raw amino-acid sequence, 804 residues long: Lon protease 2 (804 aa).

Residues 6-199 (MPVCPVRGSV…AVLVLLEAEL (194 aa)) enclose the Lon N-terminal domain. Position 362–369 (362–369 (GPPGVGKT)) interacts with ATP. The 182-residue stretch at 598–779 (EPQVGVATGM…DQVLDLALVG (182 aa)) folds into the Lon proteolytic domain. Residues Ser-685 and Lys-728 contribute to the active site.

Belongs to the peptidase S16 family. In terms of assembly, homohexamer. Organized in a ring with a central cavity.

The protein resides in the cytoplasm. The catalysed reaction is Hydrolysis of proteins in presence of ATP.. ATP-dependent serine protease that mediates the selective degradation of mutant and abnormal proteins as well as certain short-lived regulatory proteins. Required for cellular homeostasis and for survival from DNA damage and developmental changes induced by stress. Degrades polypeptides processively to yield small peptide fragments that are 5 to 10 amino acids long. Binds to DNA in a double-stranded, site-specific manner. The protein is Lon protease 2 of Thermus thermophilus (strain ATCC BAA-163 / DSM 7039 / HB27).